The chain runs to 215 residues: uncharacterized protein (215 aa).

The next 6 helical transmembrane spans lie at 21–40 (IIKYIVIFFLFYIISTVLIN), 50–69 (LIFSVICLLISLISFSTIIF), 95–117 (FVAIFICTTVGLIFVLPVIYVFF), 122–144 (LEIALFFISVWMIFVLSSSLVVL), 157–179 (NFVGTFIMPLLIPNIIMTGLILQ), and 185–207 (LIFIMIGINLIFLPVSFCLSAYL).

The protein belongs to the CcmB/CycW/HelB family.

The protein localises to the cell membrane. This is an uncharacterized protein from Rickettsia prowazekii (strain Madrid E).